The chain runs to 63 residues: MSRVDWFRGVGPMSGNTRSHAMNASRRKFNVNLQKVRVDFGSGKRTLRISTKTLKTWRKKGLI.

This sequence belongs to the bacterial ribosomal protein bL28 family.

The protein is Large ribosomal subunit protein bL28 of Mycoplasmopsis synoviae (strain 53) (Mycoplasma synoviae).